The primary structure comprises 434 residues: Transcription initiation factor IIE subunit alpha (434 aa).

Residues 8 to 99 form the HTH TFE/IIEalpha-type domain; it reads VQRLIKMIMR…DFCSTIDSIK (92 aa). The C4-type zinc-finger motif lies at 124–151; it reads CPFCNKKFSSLDVLSLVTNEGTFACNVC. 3 disordered regions span residues 217–251, 357–408, and 415–434; these read QQNLSKSNSDVRLSTSSPSITVDFSADKETDEKRE, STDY…EMQE, and INGFNEDDEDDEDEADFEDV. The segment covering 226–238 has biased composition (polar residues); that stretch reads DVRLSTSSPSITV. Composition is skewed to basic and acidic residues over residues 241–251 and 376–385; these read SADKETDEKRE and IQNKRTKSIE. Polar residues predominate over residues 386 to 399; sequence ENNSLPPIVSTNGI. Positions 419-434 are enriched in acidic residues; it reads NEDDEDDEDEADFEDV.

The protein belongs to the TFIIE alpha subunit family. In terms of assembly, TFIIE is a tetramer of two alpha (tfa1) and two beta (tfa2) subunits.

The protein resides in the nucleus. Recruits TFIIH to the initiation complex and stimulates the RNA polymerase II C-terminal domain kinase and DNA-dependent ATPase activities of TFIIH. Both TFIIH and TFIIE are required for promoter clearance by RNA polymerase. This is Transcription initiation factor IIE subunit alpha (tfa1) from Schizosaccharomyces pombe (strain 972 / ATCC 24843) (Fission yeast).